The sequence spans 188 residues: Adenine phosphoribosyltransferase (188 aa).

The protein belongs to the purine/pyrimidine phosphoribosyltransferase family. In terms of assembly, homodimer.

The protein localises to the cytoplasm. The catalysed reaction is AMP + diphosphate = 5-phospho-alpha-D-ribose 1-diphosphate + adenine. The protein operates within purine metabolism; AMP biosynthesis via salvage pathway; AMP from adenine: step 1/1. Functionally, catalyzes a salvage reaction resulting in the formation of AMP, that is energically less costly than de novo synthesis. This chain is Adenine phosphoribosyltransferase, found in Burkholderia cenocepacia (strain HI2424).